Consider the following 418-residue polypeptide: Secreted aspartic protease 6 (418 aa).

A signal peptide spans 1 to 18 (MFLKNILSVLRFALLIDA). Positions 19–76 (APVKRSPGFVTLDFNVKRSLVVPDDPTAESKRSPLFLDLDPTQIPVDDTGRNVGVDKR) are cleaved as a propeptide — activation peptide. In terms of domain architecture, Peptidase A1 spans 90-404 (YSADITVGSN…DLDDKKISMA (315 aa)). Asp108 is an active-site residue. 108-110 (DTG) serves as a coordination point for pepstatin A. Cysteines 123 and 135 form a disulfide. Residue Asn138 is glycosylated (N-linked (GlcNAc...) asparagine). Asp268 provides a ligand contact to Zn(2+). The active site involves Asp294. 294–298 (DSGTT) is a pepstatin A binding site. Cys332 and Cys370 are joined by a disulfide.

This sequence belongs to the peptidase A1 family.

It is found in the secreted. The enzyme catalyses Preferential cleavage at the carboxyl of hydrophobic amino acids, but fails to cleave 15-Leu-|-Tyr-16, 16-Tyr-|-Leu-17 and 24-Phe-|-Phe-25 of insulin B chain. Activates trypsinogen, and degrades keratin.. Its activity is regulated as follows. Inhibited by pepstatin A analogs. Functionally, secreted aspartic peptidases (SAPs) are a group of ten acidic hydrolases considered as key virulence factors. These enzymes supply the fungus with nutrient amino acids as well as are able to degrade the selected host's proteins involved in the immune defense. Moreover, acts toward human hemoglobin though limited proteolysis to generate a variety of antimicrobial hemocidins, enabling to compete with the other microorganisms of the same physiological niche using the microbicidal peptides generated from the host protein. The protein is Secreted aspartic protease 6 of Candida albicans (Yeast).